The chain runs to 63 residues: Conotoxin PnMRCL-0111 (63 aa).

The signal sequence occupies residues 1-19; sequence MRCLPVFIVLLLLIVSAPG. Positions 20-49 are excised as a propeptide; it reads FDARPKTEDDVPLSSFHDDLQRTVRTLLDI. Trp-62 carries the post-translational modification Tryptophan amide.

The protein belongs to the conotoxin T superfamily. Post-translationally, contains 2 disulfide bonds that can be either 'C1-C3, C2-C4' or 'C1-C4, C2-C3', since these disulfide connectivities have been observed for conotoxins with cysteine framework V (for examples, see AC P0DQQ7 and AC P81755). In terms of tissue distribution, expressed by the venom duct.

It is found in the secreted. This chain is Conotoxin PnMRCL-0111, found in Conus pennaceus (Feathered cone).